Reading from the N-terminus, the 237-residue chain is 4'-phosphopantetheinyl transferase HetI (237 aa).

The Mg(2+) site is built by Asp128, Glu130, and Glu174.

It belongs to the P-Pant transferase superfamily. Gsp/Sfp/HetI/AcpT family. Mg(2+) serves as cofactor.

It carries out the reaction apo-[peptidyl-carrier protein] + CoA = holo-[peptidyl-carrier protein] + adenosine 3',5'-bisphosphate + H(+). Functionally, probably activates the acyl carrier protein (ACP) domain of HetM, by transferring the 4'-phosphopantetheinyl moiety of coenzyme A (CoA) to a serine residue. May be required for maintaining vegetative growth and probably acts via HetN to inhibit differentiation. This Nostoc sp. (strain PCC 7120 / SAG 25.82 / UTEX 2576) protein is 4'-phosphopantetheinyl transferase HetI (hetI).